The chain runs to 140 residues: Ig heavy chain V region 93G7 (140 aa).

Residues 1–19 form the signal peptide; sequence MGWSFIFLFLLSVTAGVHS. The region spanning 20–139 is the Ig-like domain; it reads EVQLQQSGAE…WGQGTPLTVS (120 aa).

The sequence is that of Ig heavy chain V region 93G7 from Mus musculus (Mouse).